A 239-amino-acid chain; its full sequence is Ribonuclease PH (239 aa).

Residues Arg87 and Gly125 to Arg127 each bind phosphate.

It belongs to the RNase PH family. Homohexameric ring arranged as a trimer of dimers.

The enzyme catalyses tRNA(n+1) + phosphate = tRNA(n) + a ribonucleoside 5'-diphosphate. Its function is as follows. Phosphorolytic 3'-5' exoribonuclease that plays an important role in tRNA 3'-end maturation. Removes nucleotide residues following the 3'-CCA terminus of tRNAs; can also add nucleotides to the ends of RNA molecules by using nucleoside diphosphates as substrates, but this may not be physiologically important. Probably plays a role in initiation of 16S rRNA degradation (leading to ribosome degradation) during starvation. This is Ribonuclease PH from Saccharophagus degradans (strain 2-40 / ATCC 43961 / DSM 17024).